The chain runs to 442 residues: Lipoyl synthase, apicoplast (442 aa).

An N-terminal signal peptide occupies residues 1-23 (MRVLTPSLYIYAFFIFCVRFKCG). The interval 104–154 (LGEHQLKGKRKESATNVEKEKKEKEQQEERLPVPKVGNKMPEKKPDWFHVP) is disordered. Residues 114–135 (KESATNVEKEKKEKEQQEERLP) show a composition bias toward basic and acidic residues. 7 residues coordinate [4Fe-4S] cluster: Cys-177, Cys-182, Cys-188, Cys-203, Cys-207, Cys-210, and Ser-418. Residues 189–407 (WNIGTATIML…KEEGMKMGFK (219 aa)) enclose the Radical SAM core domain.

It belongs to the radical SAM superfamily. Lipoyl synthase family. [4Fe-4S] cluster is required as a cofactor.

The protein localises to the plastid. The protein resides in the apicoplast. The enzyme catalyses [[Fe-S] cluster scaffold protein carrying a second [4Fe-4S](2+) cluster] + N(6)-octanoyl-L-lysyl-[protein] + 2 oxidized [2Fe-2S]-[ferredoxin] + 2 S-adenosyl-L-methionine + 4 H(+) = [[Fe-S] cluster scaffold protein] + N(6)-[(R)-dihydrolipoyl]-L-lysyl-[protein] + 4 Fe(3+) + 2 hydrogen sulfide + 2 5'-deoxyadenosine + 2 L-methionine + 2 reduced [2Fe-2S]-[ferredoxin]. Its pathway is protein modification; protein lipoylation via endogenous pathway; protein N(6)-(lipoyl)lysine from octanoyl-[acyl-carrier-protein]: step 2/2. In terms of biological role, catalyzes the radical-mediated insertion of two sulfur atoms into the C-6 and C-8 positions of the octanoyl moiety bound to the lipoyl domains of lipoate-dependent enzymes, thereby converting the octanoylated domains into lipoylated derivatives. The protein is Lipoyl synthase, apicoplast of Plasmodium knowlesi (strain H).